The primary structure comprises 298 residues: MTLNTEQEAKTPLHRRASTPLPLSPRGHQPGRLSTVPSTQSQHPRLGQSASLNPPTQKPSPAPDDWSSESSDSEGSWEALYRVVLLGDPGVGKTSLASLFAGKQERDLHEQLGEDVYERTLTVDGEDTTLVVVDTWEAEKLDKSWSQESCLQGGSAYVIVYSIADRGSFESASELRIQLRRTHQADHVPIILVGNKADLARCREVSVEEGRACAVVFDCKFIETSATLQHNVAELFEGVVRQLRLRRRDSAAKEPPAPRRPASLAQRARRFLARLTARSARRRALKARSKSCHNLAVL.

Residues 1-73 form a disordered region; sequence MTLNTEQEAK…DDWSSESSDS (73 aa). The span at 35–55 shows a compositional bias: polar residues; it reads TVPSTQSQHPRLGQSASLNPP. S51 is subject to Phosphoserine. Residues 63-73 show a composition bias toward low complexity; it reads PDDWSSESSDS. GTP-binding positions include 87–94 and 195–198; these read GDPGVGKT and NKAD. Positions 268–287 are calmodulin-binding; sequence ARRFLARLTARSARRRALKA.

Belongs to the small GTPase superfamily. RGK family. In vitro, interacts with calmodulin in a calcium-dependent manner. Most highly expressed in the endothelial lining of the blood vessels in uterus and heart. Lower levels found in spleen, lymph node, kidney and testis. Also found in cells with secretory function such as the islets of Langerhans, lobule/duct epithelium in the breast, bile duct epithelium in the liver, surface epithelium in the endometrial glands of the uterus, colon mucosa and acinar cells in the pancreas and the prostate.

In terms of biological role, promotes endothelial cell sprouting and actin cytoskeletal reorganization. May be involved in angiogenesis. May function in Ca(2+) signaling. This chain is GTP-binding protein REM 1 (REM1), found in Homo sapiens (Human).